Here is a 387-residue protein sequence, read N- to C-terminus: Xylose isomerase (387 aa).

Catalysis depends on residues His-53 and Asp-56. Mg(2+) contacts are provided by Glu-180, Glu-216, His-219, Asp-244, Asp-254, Asp-256, and Asp-286.

Belongs to the xylose isomerase family. Homotetramer. Requires Mg(2+) as cofactor.

The protein localises to the cytoplasm. It catalyses the reaction alpha-D-xylose = alpha-D-xylulofuranose. In Thermus caldophilus, this protein is Xylose isomerase (xylA).